The primary structure comprises 396 residues: Dimethyladenosine transferase 2, mitochondrial (396 aa).

The transit peptide at 1–43 (MRGPAMRLPPRIALSALARGPSCILGSGAATRKDWQTRNRRGF) directs the protein to the mitochondrion. The interval 43–71 (FSDFNIEPLPDSDLEESSPWTSRNRSEPT) is disordered. Positions 74, 123, and 149 each coordinate S-adenosyl-L-methionine. The segment at 328–329 (KR) is DNA-binding.

This sequence belongs to the class I-like SAM-binding methyltransferase superfamily. rRNA adenine N(6)-methyltransferase family. KsgA subfamily. Homodimer. Component of the mitochondrial transcription initiation complex, composed at least of TFB2M, TFAM and POLRMT. In this complex TFAM recruits POLRMT to the promoter whereas TFB2M induces structural changes in POLRMT to enable promoter opening and trapping of the DNA non-template strand. Interacts with mitochondrial RNA polymerase POLRMT. Interacts with TFAM. In terms of tissue distribution, ubiquitously expressed.

It is found in the mitochondrion. It carries out the reaction adenosine in rRNA + S-adenosyl-L-methionine = N(6)-methyladenosine in rRNA + S-adenosyl-L-homocysteine + H(+). S-adenosyl-L-methionine-dependent rRNA methyltransferase which may methylate two specific adjacent adenosines in the loop of a conserved hairpin near the 3'-end of 12S mitochondrial rRNA. Component of the mitochondrial transcription initiation complex, composed at least of TFB2M, TFAM and POLRMT that is required for basal transcription of mitochondrial DNA. In this complex, TFAM recruits POLRMT to a specific promoter whereas TFB2M induces structural changes in POLRMT to enable promoter opening and trapping of the DNA non-template strand. Stimulates transcription independently of the methyltransferase activity. The polypeptide is Dimethyladenosine transferase 2, mitochondrial (Mus musculus (Mouse)).